Here is a 227-residue protein sequence, read N- to C-terminus: Protein GET1 (227 aa).

At 1 to 3 (MSL) the chain is on the lumenal side. The chain crosses the membrane as a helical span at residues 4-23 (LLTVFLIVFVTQLISWIGQN). At 24–107 (VLLEWAYNLY…SFSTKFNAVI (84 aa)) the chain is on the cytoplasmic side. The stretch at 72–96 (AKLRRSVDKGLAELEKLNSEIATAK) forms a coiled coil. A helical membrane pass occupies residues 108 to 128 (WALTSGVNLVIGWWYGRKAVF). Over 129–151 (YLPEGWMGPLTWWFSFPFAPRGS) the chain is Lumenal. A helical transmembrane segment spans residues 152 to 168 (VSVGVWSFACKRVLLVL). The Cytoplasmic portion of the chain corresponds to 169–227 (ERMVKELFFAETQAKEVPVGFSPSSSSSSTPNPMSKASSGSPSPRRRTTVTVESEDEKS). Positions 184–227 (EVPVGFSPSSSSSSTPNPMSKASSGSPSPRRRTTVTVESEDEKS) are disordered. The span at 190–211 (SPSSSSSSTPNPMSKASSGSPS) shows a compositional bias: low complexity.

It belongs to the WRB/GET1 family. In terms of assembly, interacts with GET3.

It localises to the endoplasmic reticulum membrane. In terms of biological role, required for the post-translational delivery of tail-anchored (TA) proteins to the endoplasmic reticulum. Acts as a membrane receptor for soluble GET3, which recognizes and selectively binds the transmembrane domain of TA proteins in the cytosol. This Coprinopsis cinerea (strain Okayama-7 / 130 / ATCC MYA-4618 / FGSC 9003) (Inky cap fungus) protein is Protein GET1.